We begin with the raw amino-acid sequence, 113 residues long: Nitrogenase-stabilizing/protective protein NifW (113 aa).

The protein belongs to the NifW family. In terms of assembly, homotrimer; associates with NifD.

Functionally, may protect the nitrogenase Fe-Mo protein from oxidative damage. The polypeptide is Nitrogenase-stabilizing/protective protein NifW (Dechloromonas aromatica (strain RCB)).